A 1681-amino-acid polypeptide reads, in one-letter code: Y' element ATP-dependent helicase protein 1 copy 2 (1681 aa).

A Helicase ATP-binding domain is found at 683 to 860 (EIYMADTPSV…LQRIGLTGLA (178 aa)). An ATP-binding site is contributed by 696–703 (APPGYGKT). Residues 917-1066 (KLLLALFEIE…EFYGLESKKG (150 aa)) enclose the Helicase C-terminal domain. The segment covering 1140–1283 (ANASTNATTN…ATTTESTNAS (144 aa)) has biased composition (low complexity). The tract at residues 1140-1307 (ANASTNATTN…RFHPVTDINK (168 aa)) is disordered. Basic and acidic residues predominate over residues 1284–1307 (AKEDANKDGNAEDNRFHPVTDINK).

This sequence belongs to the helicase family. Yeast subtelomeric Y' repeat subfamily.

Functionally, catalyzes DNA unwinding and is involved in telomerase-independent telomere maintenance. This Saccharomyces cerevisiae (strain ATCC 204508 / S288c) (Baker's yeast) protein is Y' element ATP-dependent helicase protein 1 copy 2 (YRF1-2).